We begin with the raw amino-acid sequence, 345 residues long: Phosphoribosylformylglycinamidine cyclo-ligase (345 aa).

Belongs to the AIR synthase family.

It localises to the cytoplasm. The enzyme catalyses 2-formamido-N(1)-(5-O-phospho-beta-D-ribosyl)acetamidine + ATP = 5-amino-1-(5-phospho-beta-D-ribosyl)imidazole + ADP + phosphate + H(+). Its pathway is purine metabolism; IMP biosynthesis via de novo pathway; 5-amino-1-(5-phospho-D-ribosyl)imidazole from N(2)-formyl-N(1)-(5-phospho-D-ribosyl)glycinamide: step 2/2. The sequence is that of Phosphoribosylformylglycinamidine cyclo-ligase from Salmonella choleraesuis (strain SC-B67).